The sequence spans 444 residues: ATP-dependent protease ATPase subunit HslU (444 aa).

ATP-binding positions include Ile20 and 62–67 (GVGKTE). The interval 130–158 (EDRILDALVPPPRGASGEPERGEDNSARQ) is disordered. The ATP site is built by Asp257, Glu322, and Arg394.

The protein belongs to the ClpX chaperone family. HslU subfamily. In terms of assembly, a double ring-shaped homohexamer of HslV is capped on each side by a ring-shaped HslU homohexamer. The assembly of the HslU/HslV complex is dependent on binding of ATP.

The protein localises to the cytoplasm. ATPase subunit of a proteasome-like degradation complex; this subunit has chaperone activity. The binding of ATP and its subsequent hydrolysis by HslU are essential for unfolding of protein substrates subsequently hydrolyzed by HslV. HslU recognizes the N-terminal part of its protein substrates and unfolds these before they are guided to HslV for hydrolysis. The sequence is that of ATP-dependent protease ATPase subunit HslU from Bordetella pertussis (strain Tohama I / ATCC BAA-589 / NCTC 13251).